Reading from the N-terminus, the 149-residue chain is Large ribosomal subunit protein uL15 (149 aa).

Over residues 1 to 12 the composition is skewed to basic and acidic residues; sequence MSEPIKLHDLRP. Residues 1–55 form a disordered region; that stretch reads MSEPIKLHDLRPAKGANKPKTRVGRGEASKGKTAGRGTKGTKARKQVSAAFEGGQ.

The protein belongs to the universal ribosomal protein uL15 family. Part of the 50S ribosomal subunit.

Functionally, binds to the 23S rRNA. The sequence is that of Large ribosomal subunit protein uL15 from Corynebacterium kroppenstedtii (strain DSM 44385 / JCM 11950 / CIP 105744 / CCUG 35717).